Consider the following 384-residue polypeptide: NADP-dependent alcohol dehydrogenase 3 (384 aa).

It belongs to the iron-containing alcohol dehydrogenase family.

The enzyme catalyses a primary alcohol + NADP(+) = an aldehyde + NADPH + H(+). In terms of biological role, has NADP-dependent alcohol dehydrogenase activity. This Entamoeba histolytica (strain ATCC 30459 / HM-1:IMSS / ABRM) protein is NADP-dependent alcohol dehydrogenase 3.